The primary structure comprises 288 residues: MKIIVPATSANIGPGFDSVGVAVSKYLTIEVLEERDEWLIEHDLNPRIPKDKRNLLIKVALQLAPNLQPYRLKMTSDIPLARGLGSSSSVIVAGIELANQLGKLDLTDDEKLDWANKIEGHPDNVAPAIFGNLVISSVFKGAVSSVRADFPECSFIAYVPKYELKTRDSRSVLPFKFSYKEAVAASSIANVAIAALLQGDLVKAGRAIESDRFHERFRQKLVREFPNIKKLAKKHGAYATYLSGAGPTIMILAPKDRAKLIQTRIEGCKYNGEVFILDVDRDGVRVEF.

ATP is bound at residue 79-89 (PLARGLGSSSS).

The protein belongs to the GHMP kinase family. Homoserine kinase subfamily.

Its subcellular location is the cytoplasm. The catalysed reaction is L-homoserine + ATP = O-phospho-L-homoserine + ADP + H(+). The protein operates within amino-acid biosynthesis; L-threonine biosynthesis; L-threonine from L-aspartate: step 4/5. In terms of biological role, catalyzes the ATP-dependent phosphorylation of L-homoserine to L-homoserine phosphate. The polypeptide is Homoserine kinase (Streptococcus gordonii (strain Challis / ATCC 35105 / BCRC 15272 / CH1 / DL1 / V288)).